The following is a 322-amino-acid chain: Acetylglutamate kinase (322 aa).

Substrate-binding positions include 85–86 (GG), Arg107, and Asn211.

It belongs to the acetylglutamate kinase family. ArgB subfamily.

It localises to the cytoplasm. The catalysed reaction is N-acetyl-L-glutamate + ATP = N-acetyl-L-glutamyl 5-phosphate + ADP. It participates in amino-acid biosynthesis; L-arginine biosynthesis; N(2)-acetyl-L-ornithine from L-glutamate: step 2/4. Catalyzes the ATP-dependent phosphorylation of N-acetyl-L-glutamate. The polypeptide is Acetylglutamate kinase (Methanosarcina barkeri (strain Fusaro / DSM 804)).